The sequence spans 70 residues: Cold shock-like protein CspB (70 aa).

The CSD domain occupies 7 to 67 (GLVKWFDAGK…GQKGPSAVNV (61 aa)).

The protein localises to the cytoplasm. This Yersinia enterocolitica protein is Cold shock-like protein CspB (cspB).